The sequence spans 688 residues: T-box transcription factor TBX2-A (688 aa).

Residues 104–277 constitute a DNA-binding region (T-box); the sequence is LWDQFHKIGT…NNPFAKGFRD (174 aa). Disordered stretches follow at residues 301–436 and 606–688; these read CKAD…GSLS and PSTN…ETPK. Basic and acidic residues-rich tracts occupy residues 340-361, 378-403, and 412-430; these read NNRE…EIRS, RLED…KDGS, and SLEK…KSDP. Residues 621 to 636 are compositionally biased toward low complexity; it reads PGSESSKPGSSRESSP. Residues 655-679 are a coiled coil; it reads ASMKDSINELQNIQRLVSGLESQRE. The segment covering 676-688 has biased composition (basic and acidic residues); that stretch reads SQREISPGRETPK.

As to quaternary structure, binds DNA as a monomer.

Its subcellular location is the nucleus. Functionally, transcription factor which acts as a transcriptional repressor. May also function as a transcriptional activator. Binds to the palindromic T site 5'-TTCACACCTAGGTGTGAA-3' DNA sequence, or a half-site, which are present in the regulatory region of several genes. This is T-box transcription factor TBX2-A (tbx2-a) from Xenopus laevis (African clawed frog).